We begin with the raw amino-acid sequence, 423 residues long: MDIDQYMTDLGRRARQASRAMARASTAAKNAALAAVAEAIERDAASLKEANARDVAKAREKGHDAAFIDRLTLSDKALKTMVEGLRQVAALADPIGEISNLKYRPSGIQVGQMRVPLGVIGIIYESRPNVTIDAAALCLKSGNATILRGGSEALECNTALAKLIGEGLEAAGLPQDAVQVVATSDRAAVGKLITMTEYVDVIVPRGGKSLIERLMNEARVPMIKHLDGICHVYVDDRADLTKALTVCDNAKTHRYGTCNTMETLLVARGIAAEVLPPLGKLYRDKQVELRVDAAARAVLADAGVGPLGDATEEDWRTEYLAPVLAIKVVDDLDAAIEHINEYSSQHTDAIVTEDHDRAMRFLREVDSASVMVNASTRFADGFEFGLGAEIGISNDKLHARGPVGLEGLTSLKYVVLGHGEGRQ.

The protein belongs to the gamma-glutamyl phosphate reductase family.

The protein resides in the cytoplasm. The enzyme catalyses L-glutamate 5-semialdehyde + phosphate + NADP(+) = L-glutamyl 5-phosphate + NADPH + H(+). Its pathway is amino-acid biosynthesis; L-proline biosynthesis; L-glutamate 5-semialdehyde from L-glutamate: step 2/2. Functionally, catalyzes the NADPH-dependent reduction of L-glutamate 5-phosphate into L-glutamate 5-semialdehyde and phosphate. The product spontaneously undergoes cyclization to form 1-pyrroline-5-carboxylate. This chain is Gamma-glutamyl phosphate reductase, found in Paraburkholderia xenovorans (strain LB400).